The chain runs to 392 residues: Formate-dependent phosphoribosylglycinamide formyltransferase (392 aa).

N(1)-(5-phospho-beta-D-ribosyl)glycinamide-binding positions include 20 to 21 (EL) and E80. ATP-binding positions include R112, K153, 158-163 (SSGKGQ), 193-196 (EEFI), and E201. The region spanning 117-306 (RLAAEELGLP…EFELHVRAIL (190 aa)) is the ATP-grasp domain. 2 residues coordinate Mg(2+): E265 and E277. N(1)-(5-phospho-beta-D-ribosyl)glycinamide-binding positions include D284, K354, and 361-362 (RR).

Belongs to the PurK/PurT family. In terms of assembly, homodimer.

It catalyses the reaction N(1)-(5-phospho-beta-D-ribosyl)glycinamide + formate + ATP = N(2)-formyl-N(1)-(5-phospho-beta-D-ribosyl)glycinamide + ADP + phosphate + H(+). The protein operates within purine metabolism; IMP biosynthesis via de novo pathway; N(2)-formyl-N(1)-(5-phospho-D-ribosyl)glycinamide from N(1)-(5-phospho-D-ribosyl)glycinamide (formate route): step 1/1. In terms of biological role, involved in the de novo purine biosynthesis. Catalyzes the transfer of formate to 5-phospho-ribosyl-glycinamide (GAR), producing 5-phospho-ribosyl-N-formylglycinamide (FGAR). Formate is provided by PurU via hydrolysis of 10-formyl-tetrahydrofolate. This Geobacter metallireducens (strain ATCC 53774 / DSM 7210 / GS-15) protein is Formate-dependent phosphoribosylglycinamide formyltransferase.